A 236-amino-acid polypeptide reads, in one-letter code: Small ribosomal subunit protein uS2c (236 aa).

This sequence belongs to the universal ribosomal protein uS2 family.

The protein resides in the plastid. It is found in the chloroplast. This chain is Small ribosomal subunit protein uS2c (rps2), found in Barbarea verna (Land cress).